The following is a 301-amino-acid chain: GTPase Era (301 aa).

Residues 7 to 175 enclose the Era-type G domain; sequence YCGFIAIVGR…AGIVRKHLPE (169 aa). A G1 region spans residues 15-22; it reads GRPNVGKS. 15–22 contributes to the GTP binding site; the sequence is GRPNVGKS. Residues 41–45 are G2; it reads QTTRH. Residues 62–65 form a G3 region; it reads DTPG. GTP-binding positions include 62–66 and 124–127; these read DTPGL and NKVD. Residues 124 to 127 form a G4 region; sequence NKVD. The interval 154 to 156 is G5; it reads ISA. The KH type-2 domain maps to 206 to 283; sequence LGAELPYSVT…HLELWVKVKS (78 aa).

It belongs to the TRAFAC class TrmE-Era-EngA-EngB-Septin-like GTPase superfamily. Era GTPase family. As to quaternary structure, monomer.

Its subcellular location is the cytoplasm. The protein resides in the cell inner membrane. Functionally, an essential GTPase that binds both GDP and GTP, with rapid nucleotide exchange. Plays a role in 16S rRNA processing and 30S ribosomal subunit biogenesis and possibly also in cell cycle regulation and energy metabolism. This is GTPase Era from Salmonella paratyphi B (strain ATCC BAA-1250 / SPB7).